A 182-amino-acid polypeptide reads, in one-letter code: Ribulose bisphosphate carboxylase small subunit, chloroplastic 4 (182 aa).

A chloroplast-targeting transit peptide spans 1 to 41 (MAATMMNKTVVLSKGCTKPSAVPKVSINRKGFLNTAMNKKR).

The protein belongs to the RuBisCO small chain family. In terms of assembly, heterohexadecamer of 8 large and 8 small subunits.

It is found in the plastid. Its subcellular location is the chloroplast. Its function is as follows. RuBisCO catalyzes two reactions: the carboxylation of D-ribulose 1,5-bisphosphate, the primary event in carbon dioxide fixation, as well as the oxidative fragmentation of the pentose substrate. Both reactions occur simultaneously and in competition at the same active site. Although the small subunit is not catalytic it is essential for maximal activity. The chain is Ribulose bisphosphate carboxylase small subunit, chloroplastic 4 from Acetabularia peniculus (Green alga).